Reading from the N-terminus, the 263-residue chain is MSSCVVTTSCFYTISDSSIRLKSPKLLNLSNQQRRRSLRSRGGLKVEAYYGLKTPPYPLDALEPYMSRRTLEVHWGKHHRGYVDNLNKQLGKDDRLYGYTMEELIKATYNNGNPLPEFNNAAQVYNHDFFWESMQPGGGDTPQKGVLEQIDKDFGSFTNFREKFTNAALTQFGSGWVWLVLKREERRLEVVKTSNAINPLVWDDIPIICVDVWEHSYYLDYKNDRAKYINTFLNHLVSWNAAMSRMARAEAFVNLGEPNIPIA.

The N-terminal 41 residues, 1–41 (MSSCVVTTSCFYTISDSSIRLKSPKLLNLSNQQRRRSLRSR), are a transit peptide targeting the chloroplast. Residues His-74, His-127, Asp-211, and His-215 each contribute to the Fe cation site.

Belongs to the iron/manganese superoxide dismutase family. In terms of assembly, homodimer. Heterodimer with FSD2. Interacts with MRL7. It depends on Fe cation as a cofactor.

The protein localises to the plastid. The protein resides in the chloroplast thylakoid. The catalysed reaction is 2 superoxide + 2 H(+) = H2O2 + O2. Activated by cpn20/cpn21 (in vitro). Functionally, destroys superoxide anion radicals which are normally produced within the cells and which are toxic to biological systems. Plays important role in chloroplast development, particularly in the maintenance of thylakoids membranes. Seems to act as a heterodimer with FSD2. The chain is Superoxide dismutase [Fe] 3, chloroplastic from Arabidopsis thaliana (Mouse-ear cress).